A 377-amino-acid polypeptide reads, in one-letter code: 23S rRNA (uracil(747)-C(5))-methyltransferase RlmC (377 aa).

Residues C3, C11, C14, and C87 each coordinate [4Fe-4S] cluster. Positions 212, 241, 262, and 307 each coordinate S-adenosyl-L-methionine. C334 functions as the Nucleophile in the catalytic mechanism.

The protein belongs to the class I-like SAM-binding methyltransferase superfamily. RNA M5U methyltransferase family. RlmC subfamily.

The catalysed reaction is uridine(747) in 23S rRNA + S-adenosyl-L-methionine = 5-methyluridine(747) in 23S rRNA + S-adenosyl-L-homocysteine + H(+). Its function is as follows. Catalyzes the formation of 5-methyl-uridine at position 747 (m5U747) in 23S rRNA. This Edwardsiella ictaluri (strain 93-146) protein is 23S rRNA (uracil(747)-C(5))-methyltransferase RlmC.